The primary structure comprises 367 residues: Peptidyl-prolyl cis-trans isomerase D (367 aa).

The PPIase cyclophilin-type domain occupies 7–171 (FFEVAIGGKT…QPVTIVDCGE (165 aa)). 3 TPR repeats span residues 213–246 (IEKLKSIGTKLFKEGNAEGALKKYLKATTYLEDY), 264–297 (ISCYLNVALMALKVNQPKVAIKAATSALDDETVA), and 302–335 (AKALFRRGSGYAALKNETDALKDLNAALELEPAD).

It belongs to the cyclophilin-type PPIase family. PPIase D subfamily.

The protein resides in the cytoplasm. The catalysed reaction is [protein]-peptidylproline (omega=180) = [protein]-peptidylproline (omega=0). In terms of biological role, PPIases accelerate the folding of proteins. It catalyzes the cis-trans isomerization of proline imidic peptide bonds in oligopeptides. This Yarrowia lipolytica (strain CLIB 122 / E 150) (Yeast) protein is Peptidyl-prolyl cis-trans isomerase D (CPR6).